The sequence spans 558 residues: Putative polypeptide N-acetylgalactosaminyltransferase 13 (558 aa).

Topologically, residues 1–12 (MHAGGKYCGPRH) are cytoplasmic. A helical; Signal-anchor for type II membrane protein transmembrane segment spans residues 13–32 (CSFYIIAFLICQLFFLVIFI). Residues 33–558 (RNDDASSANE…QFALEMEGQT (526 aa)) are Lumenal-facing. Asparagine 48 and asparagine 111 each carry an N-linked (GlcNAc...) asparagine glycan. Intrachain disulfides connect cysteine 97-cysteine 335, cysteine 326-cysteine 412, cysteine 445-cysteine 460, and cysteine 484-cysteine 498. The interval 109–225 (EANVSVVISF…EGWLEPLLER (117 aa)) is catalytic subdomain A. Substrate contacts are provided by aspartate 150 and arginine 186. Aspartate 209 contacts Mn(2+). Position 210 (serine 210) interacts with substrate. Histidine 211 provides a ligand contact to Mn(2+). The catalytic subdomain B stretch occupies residues 281–343 (PYQSPAFAGG…PCSRIGHIFR (63 aa)). Tryptophan 312 lines the substrate pocket. Histidine 340 contacts Mn(2+). The substrate site is built by arginine 343 and histidine 346. Residues 422–556 (VSPELRMHFD…SFQFALEMEG (135 aa)) enclose the Ricin B-type lectin domain. An N-linked (GlcNAc...) asparagine glycan is attached at asparagine 501. An intrachain disulfide couples cysteine 525 to cysteine 539.

This sequence belongs to the glycosyltransferase 2 family. GalNAc-T subfamily. The cofactor is Mn(2+). During embryonic stages 16-17, very weak expression in the midgut.

It localises to the golgi apparatus membrane. The catalysed reaction is L-seryl-[protein] + UDP-N-acetyl-alpha-D-galactosamine = a 3-O-[N-acetyl-alpha-D-galactosaminyl]-L-seryl-[protein] + UDP + H(+). The enzyme catalyses L-threonyl-[protein] + UDP-N-acetyl-alpha-D-galactosamine = a 3-O-[N-acetyl-alpha-D-galactosaminyl]-L-threonyl-[protein] + UDP + H(+). It functions in the pathway protein modification; protein glycosylation. In terms of biological role, may catalyze the initial reaction in O-linked oligosaccharide biosynthesis, the transfer of an N-acetyl-D-galactosamine residue to a serine or threonine residue on the protein receptor. The protein is Putative polypeptide N-acetylgalactosaminyltransferase 13 (pgant13) of Drosophila melanogaster (Fruit fly).